Reading from the N-terminus, the 95-residue chain is Small ribosomal subunit protein bS16 (95 aa).

This sequence belongs to the bacterial ribosomal protein bS16 family.

This chain is Small ribosomal subunit protein bS16, found in Streptococcus pneumoniae (strain CGSP14).